Consider the following 409-residue polypeptide: Elongation factor 1-gamma (409 aa).

Residues Ser2–Ala81 enclose the GST N-terminal domain. Residues Thr86–Leu212 form the GST C-terminal domain. Over residues Asn219–Ala248 the composition is skewed to basic and acidic residues. A disordered region spans residues Asn219–Gly261. Positions Pro251–Lys409 constitute an EF-1-gamma C-terminal domain.

In terms of assembly, EF-1 is composed of four subunits: alpha, beta, delta, and gamma.

Its function is as follows. Probably plays a role in anchoring the complex to other cellular components. This Schizosaccharomyces pombe (strain 972 / ATCC 24843) (Fission yeast) protein is Elongation factor 1-gamma (tef3).